A 389-amino-acid chain; its full sequence is Na(+)/H(+) antiporter NhaA (389 aa).

11 helical membrane-spanning segments follow: residues 14-34, 59-79, 95-115, 124-144, 154-174, 177-197, 213-233, 261-281, 290-310, 328-348, and 363-383; these read AGGI…NSPL, LLLW…GLEV, SLPS…YLLF, AGWA…MALL, VFLL…IALF, SDLS…LVGL, LILW…GVII, FLIL…NMSL, IGIA…FSFI, IAPV…IASL, and LGTL…LSKV.

It belongs to the NhaA Na(+)/H(+) (TC 2.A.33) antiporter family.

It localises to the cell inner membrane. It catalyses the reaction Na(+)(in) + 2 H(+)(out) = Na(+)(out) + 2 H(+)(in). Its function is as follows. Na(+)/H(+) antiporter that extrudes sodium in exchange for external protons. The protein is Na(+)/H(+) antiporter NhaA of Shewanella sp. (strain W3-18-1).